Here is a 155-residue protein sequence, read N- to C-terminus: Ribosome maturation factor RimP (155 aa).

The protein belongs to the RimP family.

The protein resides in the cytoplasm. In terms of biological role, required for maturation of 30S ribosomal subunits. This is Ribosome maturation factor RimP from Staphylococcus haemolyticus (strain JCSC1435).